The primary structure comprises 314 residues: Probable cell division protein WhiA (314 aa).

A DNA-binding region (H-T-H motif) is located at residues 275–309 (SLKELGELVTSGAISKSGVNHRLKKIDEFAEKIKR).

The protein belongs to the WhiA family.

Its function is as follows. Involved in cell division and chromosome segregation. The chain is Probable cell division protein WhiA from Oceanobacillus iheyensis (strain DSM 14371 / CIP 107618 / JCM 11309 / KCTC 3954 / HTE831).